The primary structure comprises 28 residues: ALWKDLLKNVGIAAGKAVLNKVTDMVNQ.

The residue at position 28 (Q28) is a Glutamine amide.

In terms of tissue distribution, expressed by the skin glands.

The protein localises to the secreted. Its function is as follows. Has antimicrobial activity. This chain is Dermaseptin-1, found in Phyllomedusa tomopterna (Tiger-striped leaf frog).